A 310-amino-acid polypeptide reads, in one-letter code: Bifunctional protein FolD 3, chloroplastic (310 aa).

A chloroplast-targeting transit peptide spans 1-48 (MFTDCSSSTTSRLIHLYNRNGVFLPRPSVSQFSLRTTASTWRCTLSIR).

The protein belongs to the tetrahydrofolate dehydrogenase/cyclohydrolase family. Homodimer.

The protein resides in the plastid. The protein localises to the chloroplast. It carries out the reaction (6R)-5,10-methylene-5,6,7,8-tetrahydrofolate + NADP(+) = (6R)-5,10-methenyltetrahydrofolate + NADPH. It catalyses the reaction (6R)-5,10-methenyltetrahydrofolate + H2O = (6R)-10-formyltetrahydrofolate + H(+). Its pathway is one-carbon metabolism; tetrahydrofolate interconversion. Functionally, catalyzes the oxidation of 5,10-methylenetetrahydrofolate to 5,10-methenyltetrahydrofolate and then the hydrolysis of 5,10-methenyltetrahydrofolate to 10-formyltetrahydrofolate. This chain is Bifunctional protein FolD 3, chloroplastic (FOLD3), found in Arabidopsis thaliana (Mouse-ear cress).